Consider the following 478-residue polypeptide: MASAMAGAGPAPGLPVAGGPVVPGPGVGIPGKSGEERLKEMEAEMALFEQEVLGAPVTGIPTAVPAVPTVEAMQVPPAPVIRPIIATNTYQQVQQTLEARAAAAATVVPPMVGGPPFVGPVGFGPADRGHLDSPEAREAMFLRRAAVAPQRAPILRPAFVPHVLQRADSALSSAAGGPRPMALRPPHQALVGPPLPGPPGPPMMLPPMARAPGPPLGSMAALRPPLEEPAAPRELGLGLGLGLKDKEEAVVAAAAGLEEASAAVAVGAGGAPAGPAVIGPSLPLALAMPLPEPEPLPLPLEVVRGLLPPLRIPELLSLRPRPRPPRPEPPPGLMALEVPEPLGEDKKKGKPEKLKRCIRTAAGSSWEDPSLLEWDADDFRIFCGDLGNEVNDDILARAFSRFPSFLKAKVIRDKRTGKTKGYGFVSFKDPSDYVRAMREMNGKYVGSRPIKLRKSMWKDRNLDVVRKKQKEKKKLGLR.

A compositionally biased stretch (low complexity) spans 1-20 (MASAMAGAGPAPGLPVAGGP). The tract at residues 1–33 (MASAMAGAGPAPGLPVAGGPVVPGPGVGIPGKS) is disordered. At Ala2 the chain carries N-acetylalanine. Phosphoserine is present on Ser133. Residues Arg151, Arg156, Arg166, and Arg179 each carry the asymmetric dimethylarginine modification. Disordered stretches follow at residues 171-207 (LSSA…MLPP) and 317-354 (SLRP…PEKL). A compositionally biased stretch (pro residues) spans 193-205 (PPLPGPPGPPMML). The necessary for interaction with HNRNPK stretch occupies residues 234-478 (ELGLGLGLGL…QKEKKKLGLR (245 aa)). Over residues 343–354 (GEDKKKGKPEKL) the composition is skewed to basic and acidic residues. Positions 379–457 (FRIFCGDLGN…RPIKLRKSMW (79 aa)) constitute an RRM domain.

It belongs to the RRM RBM42 family. Interacts with HNRNPK. In terms of tissue distribution, expressed in cell lines (at protein level). Expressed in heart, brain, spleen, lung, liver, skeletal muscle, kidney and testis.

The protein localises to the nucleus. It is found in the cytoplasm. In terms of biological role, binds (via the RRM domain) to the 3'-untranslated region (UTR) of CDKN1A mRNA. This chain is RNA-binding protein 42 (Rbm42), found in Mus musculus (Mouse).